Here is a 242-residue protein sequence, read N- to C-terminus: Transcriptional activator protein RaiR (242 aa).

In terms of domain architecture, HTH luxR-type spans 177-242 (KVADLPRLSR…EQLLGPRRSN (66 aa)). Positions 201–220 (AKQICARLSISVSAVQLYLA) form a DNA-binding region, H-T-H motif.

This sequence belongs to the autoinducer-regulated transcriptional regulatory protein family.

In Rhizobium etli, this protein is Transcriptional activator protein RaiR (raiR).